A 362-amino-acid chain; its full sequence is Prostaglandin E2 receptor EP2 subtype (362 aa).

Residues 1 to 24 lie on the Extracellular side of the membrane; it reads MDNFLNDSKLMEDCKSRQWLLSGE. An N-linked (GlcNAc...) asparagine glycan is attached at Asn-6. A helical transmembrane segment spans residues 25 to 48; the sequence is SPAISSVMFSAGVLGNLIALALLA. Over 49–66 the chain is Cytoplasmic; that stretch reads RRWRGDTGCSAGSRTSIS. A helical membrane pass occupies residues 67–92; the sequence is LFHVLVTELVLTDLLGTCLISPVVLA. Topologically, residues 93 to 112 are extracellular; that stretch reads SYSRNQTLVALAPESHACTY. The cysteines at positions 110 and 188 are disulfide-linked. A helical membrane pass occupies residues 113 to 133; it reads FAFTMTFFSLATMLMLFAMAL. Residues 134-152 lie on the Cytoplasmic side of the membrane; that stretch reads ERYLSIGYPYFYRRHLSRR. Residues 153–177 form a helical membrane-spanning segment; the sequence is GGLAVLPVIYGASLLFCSLPLLNYG. The Extracellular segment spans residues 178–199; the sequence is EYVQYCPGTWCFIRHGRTAYLQ. The chain crosses the membrane as a helical span at residues 200–224; sequence LYATMLLLLIVAVLACNISVILNLI. Residues 225 to 262 are Cytoplasmic-facing; sequence RMHRRSRRSRCGLSGSSLRGPGSRRRGERTSMAEETDH. The interval 234 to 255 is disordered; the sequence is RCGLSGSSLRGPGSRRRGERTS. Low complexity predominate over residues 235 to 245; sequence CGLSGSSLRGP. The helical transmembrane segment at 263–286 threads the bilayer; that stretch reads LILLAIMTITFAICSLPFTIFAYM. Topologically, residues 287-299 are extracellular; the sequence is DETSSLKEKWDLR. The helical transmembrane segment at 300 to 323 threads the bilayer; sequence ALRFLSVNSIIDPWVFAILRPPVL. The Cytoplasmic segment spans residues 324–362; sequence RLMRSVLCCRTSLRTQEAQQTSCSTQSSASKQTDLCGQL.

This sequence belongs to the G-protein coupled receptor 1 family.

It is found in the cell membrane. Functionally, receptor for prostaglandin E2 (PGE2). The activity of this receptor is mediated by G(s) proteins that stimulate adenylate cyclase. The subsequent raise in intracellular cAMP is responsible for the relaxing effect of this receptor on smooth muscle. The protein is Prostaglandin E2 receptor EP2 subtype (Ptger2) of Mus musculus (Mouse).